The sequence spans 255 residues: Geranylgeranylglyceryl phosphate synthase (255 aa).

Mg(2+) is bound by residues Asp34 and Thr64. Residues 182 to 188, 213 to 214, and 235 to 236 contribute to the sn-glycerol 1-phosphate site; these read YLEAGSG, GG, and GN.

Belongs to the GGGP/HepGP synthase family. Group II subfamily. The cofactor is Mg(2+).

The protein localises to the cytoplasm. It carries out the reaction sn-glycerol 1-phosphate + (2E,6E,10E)-geranylgeranyl diphosphate = sn-3-O-(geranylgeranyl)glycerol 1-phosphate + diphosphate. Its pathway is membrane lipid metabolism; glycerophospholipid metabolism. Functionally, prenyltransferase that catalyzes the transfer of the geranylgeranyl moiety of geranylgeranyl diphosphate (GGPP) to the C3 hydroxyl of sn-glycerol-1-phosphate (G1P). This reaction is the first ether-bond-formation step in the biosynthesis of archaeal membrane lipids. The polypeptide is Geranylgeranylglyceryl phosphate synthase (Saccharolobus islandicus (strain M.16.27) (Sulfolobus islandicus)).